The chain runs to 146 residues: Acireductone dioxygenase (146 aa).

Residues H71, H73, E77, and H116 each contribute to the Fe(2+) site. The Ni(2+) site is built by H71, H73, E77, and H116.

Belongs to the acireductone dioxygenase (ARD) family. Fe(2+) is required as a cofactor. Ni(2+) serves as cofactor.

Its subcellular location is the cytoplasm. It localises to the nucleus. It carries out the reaction 1,2-dihydroxy-5-(methylsulfanyl)pent-1-en-3-one + O2 = 4-methylsulfanyl-2-oxobutanoate + formate + 2 H(+). It catalyses the reaction 1,2-dihydroxy-5-(methylsulfanyl)pent-1-en-3-one + O2 = 3-(methylsulfanyl)propanoate + CO + formate + 2 H(+). Its pathway is amino-acid biosynthesis; L-methionine biosynthesis via salvage pathway; L-methionine from S-methyl-5-thio-alpha-D-ribose 1-phosphate: step 5/6. Its function is as follows. Catalyzes 2 different reactions between oxygen and the acireductone 1,2-dihydroxy-3-keto-5-methylthiopentene (DHK-MTPene) depending upon the metal bound in the active site. Fe-containing acireductone dioxygenase (Fe-ARD) produces formate and 2-keto-4-methylthiobutyrate (KMTB), the alpha-ketoacid precursor of methionine in the methionine recycle pathway. Ni-containing acireductone dioxygenase (Ni-ARD) produces methylthiopropionate, carbon monoxide and formate, and does not lie on the methionine recycle pathway. This is Acireductone dioxygenase from Heterostelium pallidum (strain ATCC 26659 / Pp 5 / PN500) (Cellular slime mold).